The sequence spans 668 residues: Tastin (668 aa).

Disordered regions lie at residues 1 to 102, 154 to 177, and 189 to 285; these read MTTL…GGSN, ERKG…PRIP, and FSRL…GRHH. Ser-16 carries the post-translational modification Phosphoserine. Composition is skewed to polar residues over residues 27 to 37 and 55 to 64; these read QRCQDFSSVKS and PRSTQRQRPL. The residue at position 97 (Ser-97) is a Phosphoserine. A compositionally biased stretch (polar residues) spans 158 to 168; that stretch reads GTTQRGQSARS. At Ser-169 the chain carries Phosphoserine. Basic and acidic residues-rich tracts occupy residues 227–246 and 269–282; these read ELRR…DRRT and GEQE…DGGG. Ser-306, Ser-324, and Ser-338 each carry phosphoserine. Disordered stretches follow at residues 364–392 and 462–502; these read ITLQ…HQEL and TEPL…AEPE.

As to quaternary structure, directly binds bystin, and indirectly trophinin.

It is found in the cytoplasm. Functionally, could be involved with bystin and trophinin in a cell adhesion molecule complex that mediates an initial attachment of the blastocyst to uterine epithelial cells at the time of the embryo implantation. This is Tastin from Mus musculus (Mouse).